Here is a 110-residue protein sequence, read N- to C-terminus: HIT-like protein CPn_0488/CP_0266/CPj0488/CpB0508 (110 aa).

Positions 3-110 (VFKQIIDGLI…LGGRPLGAIA (108 aa)) constitute an HIT domain. Positions 95 to 99 (HLHIH) match the Histidine triad motif motif.

The chain is HIT-like protein CPn_0488/CP_0266/CPj0488/CpB0508 from Chlamydia pneumoniae (Chlamydophila pneumoniae).